The chain runs to 72 residues: Candidate secreted effector protein MPL124499 (72 aa).

Residues Met-1–Gly-21 form the signal peptide.

This sequence belongs to the CPGH1 family.

It localises to the secreted. The protein resides in the host cell. It is found in the host cytoplasm. Its subcellular location is the host nucleus. Functionally, rust effector delivered into infected tissues to modulate host functions and contribute to pathogen virulence. Enhances leaf colonization by the bacteria Pseudomonas syringae and the oomycete Hyaloperonospora arabidopsidis pathogens in an Arabidopsis thaliana infection model. This Melampsora larici-populina (strain 98AG31 / pathotype 3-4-7) (Poplar leaf rust fungus) protein is Candidate secreted effector protein MPL124499.